The primary structure comprises 151 residues: MLVYGLYKSPLGYITVAKDDKGFIMLDFCDCVEGNSRDDSSFTEFFHKLDLYFEGKPINLREPINLKTYPFRLSVFKEVMRIPWGKVMTYKQIADSLGTSPRAVGMALSKNPILLIIPCHRVIAENGIGGYSRGVKLKRALLELEGVKIPE.

Cys-119 acts as the Nucleophile; methyl group acceptor in catalysis.

This sequence belongs to the MGMT family.

It is found in the cytoplasm. The enzyme catalyses a 6-O-methyl-2'-deoxyguanosine in DNA + L-cysteinyl-[protein] = S-methyl-L-cysteinyl-[protein] + a 2'-deoxyguanosine in DNA. It carries out the reaction a 4-O-methyl-thymidine in DNA + L-cysteinyl-[protein] = a thymidine in DNA + S-methyl-L-cysteinyl-[protein]. In terms of biological role, involved in the cellular defense against the biological effects of O6-methylguanine (O6-MeG) and O4-methylthymine (O4-MeT) in DNA. Repairs the methylated nucleobase in DNA by stoichiometrically transferring the methyl group to a cysteine residue in the enzyme. This is a suicide reaction: the enzyme is irreversibly inactivated. The protein is Methylated-DNA--protein-cysteine methyltransferase of Saccharolobus islandicus (strain M.16.27) (Sulfolobus islandicus).